Here is a 778-residue protein sequence, read N- to C-terminus: Aerobic respiration control sensor protein ArcB (778 aa).

Residues 1–25 are Cytoplasmic-facing; the sequence is MKQIRLLAQYYVDLMMKLGLVRFSM. A helical membrane pass occupies residues 26 to 46; that stretch reads LLALALVVLAIVVQMAVTMVL. Residues 47–57 lie on the Periplasmic side of the membrane; sequence HGQVESIDVIR. Residues 58-78 traverse the membrane as a helical segment; the sequence is SIFFGLLITPWAVYFLSVVVE. The Cytoplasmic segment spans residues 79 to 778; sequence QLEESRQRLS…KAWVAKATKK (700 aa). Positions 153-223 constitute a PAS domain; that stretch reads QSSFLRSFLD…ETDEKVFRHN (71 aa). The PAC domain maps to 226–278; that stretch reads LTYEQWLDYPDGRKACFEIRKVPYYDRVGKRHGLMGFGRDITERKRYQDALER. Positions 289-507 constitute a Histidine kinase domain; sequence TISHELRTPL…TFTLTIHAPS (219 aa). H292 carries the phosphohistidine; by autocatalysis modification. Positions 527 to 643 constitute a Response regulatory domain; it reads NVLLVEDIEL…ALTAMIKKFW (117 aa). The residue at position 576 (D576) is a 4-aspartylphosphate. In terms of domain architecture, HPt spans 678–771; sequence GPKLITDGLA…RHDVEVLKAW (94 aa). Position 717 is a phosphohistidine (H717).

Post-translationally, activation requires a sequential transfer of a phosphate group from a His in the primary transmitter domain, to an Asp in the receiver domain and to a His in the secondary transmitter domain.

It is found in the cell inner membrane. The enzyme catalyses ATP + protein L-histidine = ADP + protein N-phospho-L-histidine.. Its function is as follows. Member of the two-component regulatory system ArcB/ArcA. Sensor-regulator protein for anaerobic repression of the arc modulon. Activates ArcA via a four-step phosphorelay. ArcB can also dephosphorylate ArcA by a reverse phosphorelay involving His-717 and Asp-576. The polypeptide is Aerobic respiration control sensor protein ArcB (arcB) (Escherichia coli (strain K12)).